The following is a 143-amino-acid chain: Large ribosomal subunit protein uL15 (143 aa).

The tract at residues 1–47 (MKLHELTPSEGSRFSRRRIGRGDSSGQGKTSGRGQKGQKARGKVRVG) is disordered. A compositionally biased stretch (gly residues) spans 23-35 (DSSGQGKTSGRGQ).

This sequence belongs to the universal ribosomal protein uL15 family. Part of the 50S ribosomal subunit.

Its function is as follows. Binds to the 23S rRNA. This chain is Large ribosomal subunit protein uL15, found in Lactiplantibacillus plantarum (strain ATCC BAA-793 / NCIMB 8826 / WCFS1) (Lactobacillus plantarum).